The primary structure comprises 423 residues: Enolase (423 aa).

Residue Q162 participates in (2R)-2-phosphoglycerate binding. E204 acts as the Proton donor in catalysis. Mg(2+) is bound by residues D241, E284, and D311. Positions 336, 365, 366, and 387 each coordinate (2R)-2-phosphoglycerate. K336 (proton acceptor) is an active-site residue.

Belongs to the enolase family. The cofactor is Mg(2+).

It is found in the cytoplasm. The protein resides in the secreted. It localises to the cell surface. The catalysed reaction is (2R)-2-phosphoglycerate = phosphoenolpyruvate + H2O. The protein operates within carbohydrate degradation; glycolysis; pyruvate from D-glyceraldehyde 3-phosphate: step 4/5. Functionally, catalyzes the reversible conversion of 2-phosphoglycerate (2-PG) into phosphoenolpyruvate (PEP). It is essential for the degradation of carbohydrates via glycolysis. The protein is Enolase of Bartonella bacilliformis (strain ATCC 35685 / KC583 / Herrer 020/F12,63).